The chain runs to 320 residues: Ferrochelatase (320 aa).

Fe cation is bound by residues His194 and Glu275.

The protein belongs to the ferrochelatase family. Monomer.

It localises to the cytoplasm. The catalysed reaction is heme b + 2 H(+) = protoporphyrin IX + Fe(2+). Its pathway is porphyrin-containing compound metabolism; protoheme biosynthesis; protoheme from protoporphyrin-IX: step 1/1. Catalyzes the ferrous insertion into protoporphyrin IX. In Salmonella agona (strain SL483), this protein is Ferrochelatase.